The sequence spans 560 residues: MNIDVVLLLKQNPILLIFVVLSIGLAIGKIRFGSLQLGNSIGVLITSLIMGHLGFSFNADALTIGFMLFIYCVGIEAGPNFFGIFFRDGKHYLILSLVVLSTAIALTYFCSEYLGLGFGLSAGMMAGALTATPILVGAQDALNSGLAEVPRNMDLGLVIENLSVGYAMAYLVGLISMIMFARLIPKLQKVNLHDSAEQIAQERGLGTSGQRKVYLPIIRAYRVGPELITWTDGKNLRELGIYRQTGCYIERIRRNGILAHPDGDAILQEGDEIALVGFPDSHARLDPSFRNGKEVFDRNLLDLRIVEEEIVVKSDNIAGKRLSDLNLSEYGCFLNRVVRAQIEMPMDLNIVLSKGDVLQVSGEKSRVHGLAEKIGFISIHSQMADLTAFCSFFILGILFGLITMTFGQVSFGLGNAVGLLLSGIMLGFLRANHPTFGYVPQGALNMVKDLGLMFFMVGIGLSAGGKIFEHLTQVGPQVIGIALIVSVLPVFFAYLVGAYALKMNRALLFGAIIGARTCAPAMDIVNDHARSTIPALGYAGTYAIANILMTLAGTFIIIIS.

5 consecutive transmembrane segments (helical) span residues 5 to 25, 37 to 57, 66 to 86, 91 to 111, and 155 to 175; these read VVLL…SIGL, LGNS…GFSF, FMLF…GIFF, HYLI…YFCS, and LGLV…VGLI. RCK C-terminal domains follow at residues 203-292 and 293-376; these read RGLG…FRNG and KEVF…KIGF. The next 6 membrane-spanning stretches (helical) occupy residues 386-406, 409-429, 450-470, 478-498, 506-526, and 539-559; these read LTAF…TMTF, VSFG…LGFL, LGLM…IFEH, VIGI…LVGA, ALLF…DIVN, and AGTY…IIII.

The protein belongs to the AAE transporter (TC 2.A.81) family. YbjL subfamily.

It localises to the cell membrane. The chain is Putative transport protein VS_1837 from Vibrio atlanticus (strain LGP32) (Vibrio splendidus (strain Mel32)).